The chain runs to 514 residues: HTH-type transcriptional regulatory protein TyrR (514 aa).

The ACT domain occupies 2–72 (RLEVFCEDRL…GVTDVRTVPW (71 aa)). The 43-residue stretch at 78 to 120 (EHLALSALLEALPEPVLSLDMKSKIEMANPASCQLFAHTQDRM) folds into the PAS domain. Positions 206–428 (IIAVSAKMKH…VKNAIYRALT (223 aa)) constitute a Sigma-54 factor interaction domain. ATP contacts are provided by residues 234-241 (GNTGTGKD) and 290-299 (ANGGSVLLDE). The H-T-H motif DNA-binding region spans 482–502 (STRKLAKRLGVSHTAIANKLR).

Homodimer. In presence of tyrosine (or high concentrations of phenylalanine or tryptophan) and ATP, it self-associates to form an hexamer.

It localises to the cytoplasm. Functionally, dual transcriptional regulator of the TyrR regulon, which includes a number of genes coding for proteins involved in the biosynthesis or transport of the three aromatic amino acids, phenylalanine, tyrosine and tryptophan. These three aromatic amino acids act as effectors which bind to the TyrR protein to form an active regulatory protein. Acts by binding specifically to TyrR boxes in the promoter region of the target genes. This is HTH-type transcriptional regulatory protein TyrR from Citrobacter braakii.